The sequence spans 278 residues: Orotidine 5'-phosphate decarboxylase (278 aa).

Catalysis depends on Lys96, which acts as the Proton donor.

It belongs to the OMP decarboxylase family. Type 2 subfamily.

The enzyme catalyses orotidine 5'-phosphate + H(+) = UMP + CO2. Its pathway is pyrimidine metabolism; UMP biosynthesis via de novo pathway; UMP from orotate: step 2/2. This Salinispora tropica (strain ATCC BAA-916 / DSM 44818 / JCM 13857 / NBRC 105044 / CNB-440) protein is Orotidine 5'-phosphate decarboxylase.